A 750-amino-acid polypeptide reads, in one-letter code: Alpha-galactosidase C (750 aa).

The first 26 residues, 1-26, serve as a signal peptide directing secretion; it reads MFRSTATVAAATAMGLLTATGHGSLA. 8 N-linked (GlcNAc...) asparagine glycosylation sites follow: N58, N162, N186, N194, N366, N428, N432, and N453. D511 (nucleophile) is an active-site residue. The active-site Proton donor is D573.

Belongs to the glycosyl hydrolase 36 family. As to quaternary structure, homotetramer. Mg(2+) serves as cofactor. NAD(+) is required as a cofactor.

It localises to the secreted. The catalysed reaction is Hydrolysis of terminal, non-reducing alpha-D-galactose residues in alpha-D-galactosides, including galactose oligosaccharides, galactomannans and galactolipids.. In terms of biological role, hydrolyzes a variety of simple alpha-D-galactoside as well as more complex molecules such as oligosaccharides and polysaccharides. Active on paranitrophenyl-alpha-galactoside, raffinose, locust bean gum and gum guar. The protein is Alpha-galactosidase C (aglC) of Emericella nidulans (strain FGSC A4 / ATCC 38163 / CBS 112.46 / NRRL 194 / M139) (Aspergillus nidulans).